Consider the following 92-residue polypeptide: Small ribosomal subunit protein uS19c (92 aa).

Belongs to the universal ribosomal protein uS19 family.

The protein localises to the plastid. Protein S19 forms a complex with S13 that binds strongly to the 16S ribosomal RNA. This Aneura mirabilis (Parasitic liverwort) protein is Small ribosomal subunit protein uS19c.